A 342-amino-acid chain; its full sequence is NAD kinase (342 aa).

The Proton acceptor role is filled by aspartate 66. Residues 66–67 (DG), arginine 71, 141–142 (ND), lysine 152, aspartate 171, 182–187 (TAYAFS), and alanine 206 contribute to the NAD(+) site.

It belongs to the NAD kinase family. A divalent metal cation is required as a cofactor.

It is found in the cytoplasm. It catalyses the reaction NAD(+) + ATP = ADP + NADP(+) + H(+). Its function is as follows. Involved in the regulation of the intracellular balance of NAD and NADP, and is a key enzyme in the biosynthesis of NADP. Catalyzes specifically the phosphorylation on 2'-hydroxyl of the adenosine moiety of NAD to yield NADP. This is NAD kinase from Bifidobacterium longum (strain NCC 2705).